Here is a 427-residue protein sequence, read N- to C-terminus: Serine--tRNA ligase (427 aa).

231-233 (TAE) is a binding site for L-serine. Residue 262 to 264 (RSE) participates in ATP binding. Glutamate 285 contacts L-serine. 349-352 (EISS) is a binding site for ATP. Serine 385 is a binding site for L-serine.

This sequence belongs to the class-II aminoacyl-tRNA synthetase family. Type-1 seryl-tRNA synthetase subfamily. In terms of assembly, homodimer. The tRNA molecule binds across the dimer.

It is found in the cytoplasm. The enzyme catalyses tRNA(Ser) + L-serine + ATP = L-seryl-tRNA(Ser) + AMP + diphosphate + H(+). It catalyses the reaction tRNA(Sec) + L-serine + ATP = L-seryl-tRNA(Sec) + AMP + diphosphate + H(+). The protein operates within aminoacyl-tRNA biosynthesis; selenocysteinyl-tRNA(Sec) biosynthesis; L-seryl-tRNA(Sec) from L-serine and tRNA(Sec): step 1/1. Its function is as follows. Catalyzes the attachment of serine to tRNA(Ser). Is also able to aminoacylate tRNA(Sec) with serine, to form the misacylated tRNA L-seryl-tRNA(Sec), which will be further converted into selenocysteinyl-tRNA(Sec). The protein is Serine--tRNA ligase of Exiguobacterium sp. (strain ATCC BAA-1283 / AT1b).